Here is a 401-residue protein sequence, read N- to C-terminus: Probable tRNA sulfurtransferase (401 aa).

A THUMP domain is found at 60–165; sequence EPIIDKLKNV…QEGTYITCHD (106 aa). Residues 183-184, 208-209, arginine 265, glycine 287, and glutamine 296 each bind ATP; these read ML and HF.

The protein belongs to the ThiI family.

The protein localises to the cytoplasm. It catalyses the reaction [ThiI sulfur-carrier protein]-S-sulfanyl-L-cysteine + a uridine in tRNA + 2 reduced [2Fe-2S]-[ferredoxin] + ATP + H(+) = [ThiI sulfur-carrier protein]-L-cysteine + a 4-thiouridine in tRNA + 2 oxidized [2Fe-2S]-[ferredoxin] + AMP + diphosphate. It carries out the reaction [ThiS sulfur-carrier protein]-C-terminal Gly-Gly-AMP + S-sulfanyl-L-cysteinyl-[cysteine desulfurase] + AH2 = [ThiS sulfur-carrier protein]-C-terminal-Gly-aminoethanethioate + L-cysteinyl-[cysteine desulfurase] + A + AMP + 2 H(+). It participates in cofactor biosynthesis; thiamine diphosphate biosynthesis. Its function is as follows. Catalyzes the ATP-dependent transfer of a sulfur to tRNA to produce 4-thiouridine in position 8 of tRNAs, which functions as a near-UV photosensor. Also catalyzes the transfer of sulfur to the sulfur carrier protein ThiS, forming ThiS-thiocarboxylate. This is a step in the synthesis of thiazole, in the thiamine biosynthesis pathway. The sulfur is donated as persulfide by IscS. The chain is Probable tRNA sulfurtransferase from Geobacillus sp. (strain WCH70).